The primary structure comprises 290 residues: MFTRSLTRLQPQLFSRRLITSSRIPKYSSFLNQSPVNIIKRNYVIIHKQRKKEPVLRYLFYMIVLSWGFIYYVANRVDKKTVKKDFSEREFQQYEEATGVKRRNKLISGDLSSKYKFYVIPYINDNEQLDKIVNLLKSKDEGTHVKIIDPSELIEQQKQDEGLRYHYLLHDLEEQKRPYPQGLITALVKQEINNYSNTRQGTFETNFIIKNYPQTTAEAIKFENDVADVQKCLILHFDMLNELPKYKNEEEQRAIQNVDGYFDSVGRAKTLIDKFDPMDEEFEEIMMEDL.

The transit peptide at 1–26 directs the protein to the mitochondrion; that stretch reads MFTRSLTRLQPQLFSRRLITSSRIPK. A helical transmembrane segment spans residues 55–74; the sequence is VLRYLFYMIVLSWGFIYYVA.

Belongs to the AIM36 family.

It is found in the mitochondrion membrane. The chain is Altered inheritance of mitochondria protein 36, mitochondrial (AIM36) from Candida tropicalis (strain ATCC MYA-3404 / T1) (Yeast).